The chain runs to 134 residues: Small ribosomal subunit protein uS8c (134 aa).

It belongs to the universal ribosomal protein uS8 family. In terms of assembly, part of the 30S ribosomal subunit.

The protein resides in the plastid. Its function is as follows. One of the primary rRNA binding proteins, it binds directly to 16S rRNA central domain where it helps coordinate assembly of the platform of the 30S subunit. This chain is Small ribosomal subunit protein uS8c (rps8), found in Cuscuta reflexa (Southern Asian dodder).